Consider the following 193-residue polypeptide: 7-methyl-GTP pyrophosphatase (193 aa).

The active-site Proton acceptor is D70.

It belongs to the Maf family. YceF subfamily. Requires a divalent metal cation as cofactor.

The protein resides in the cytoplasm. It carries out the reaction N(7)-methyl-GTP + H2O = N(7)-methyl-GMP + diphosphate + H(+). Nucleoside triphosphate pyrophosphatase that hydrolyzes 7-methyl-GTP (m(7)GTP). May have a dual role in cell division arrest and in preventing the incorporation of modified nucleotides into cellular nucleic acids. In Photobacterium profundum (strain SS9), this protein is 7-methyl-GTP pyrophosphatase.